A 379-amino-acid chain; its full sequence is Probable peptidoglycan glycosyltransferase FtsW (379 aa).

At 1–15 (MHKTEAQTYLLYDRT) the chain is on the cytoplasmic side. The chain crosses the membrane as a helical span at residues 16 to 36 (LLLLTMGLVGIGLVMVISTSM). Residues 37 to 52 (PIGVRLSEDPFYFARR) lie on the Periplasmic side of the membrane. A helical transmembrane segment spans residues 53–73 (YAFYLGLAVVLSLVTLGIPMA). At 74 to 79 (SWQRGS) the chain is on the cytoplasmic side. A helical transmembrane segment spans residues 80–100 (SLILLITLIMLLLVLIAGQSV). Residues 101-113 (NGAVRWLALGPWR) are Periplasmic-facing. A helical membrane pass occupies residues 114-133 (IQPAELSKLALFCYLASYLV). Residues 134–139 (RKAEEV) are Cytoplasmic-facing. The helical transmembrane segment at 140-162 (RTNFWGFCKPIGVMVLLAILLLA) threads the bilayer. The Periplasmic segment spans residues 163-165 (QPD). Residues 166–183 (LGTVLVLFITTLAMLFLA) traverse the membrane as a helical segment. At 184–186 (EAK) the chain is on the cytoplasmic side. Residues 187–207 (IWQFLPIIGTGILAVMLLIIA) form a helical membrane-spanning segment. The Periplasmic portion of the chain corresponds to 208 to 269 (KPYRRRRVTS…TEAHTDFICS (62 aa)). The chain crosses the membrane as a helical span at residues 270-290 (ILGEELGYFGVLLALLMVFLV). Residues 291 to 301 (AFRAMSIGRKA) are Cytoplasmic-facing. The helical transmembrane segment at 302-322 (LAINQIFSGFLACSIGIWFSF) threads the bilayer. Residues 323–342 (QTMVNVGAAAGMLPTKGLTL) lie on the Periplasmic side of the membrane. The helical transmembrane segment at 343–363 (PFISYGGSSMLIMLTAIVLLI) threads the bilayer. Residues 364–379 (RIDFETRLAKLQAFVR) are Cytoplasmic-facing.

This sequence belongs to the SEDS family. FtsW subfamily.

Its subcellular location is the cell inner membrane. The enzyme catalyses [GlcNAc-(1-&gt;4)-Mur2Ac(oyl-L-Ala-gamma-D-Glu-L-Lys-D-Ala-D-Ala)](n)-di-trans,octa-cis-undecaprenyl diphosphate + beta-D-GlcNAc-(1-&gt;4)-Mur2Ac(oyl-L-Ala-gamma-D-Glu-L-Lys-D-Ala-D-Ala)-di-trans,octa-cis-undecaprenyl diphosphate = [GlcNAc-(1-&gt;4)-Mur2Ac(oyl-L-Ala-gamma-D-Glu-L-Lys-D-Ala-D-Ala)](n+1)-di-trans,octa-cis-undecaprenyl diphosphate + di-trans,octa-cis-undecaprenyl diphosphate + H(+). The protein operates within cell wall biogenesis; peptidoglycan biosynthesis. In terms of biological role, peptidoglycan polymerase that is essential for cell division. The polypeptide is Probable peptidoglycan glycosyltransferase FtsW (Moranella endobia (strain PCIT)).